Reading from the N-terminus, the 329-residue chain is Beta-ketoacyl-[acyl-carrier-protein] synthase III (329 aa).

Catalysis depends on residues cysteine 123 and histidine 256. The interval 257–261 (QANIR) is ACP-binding. The active site involves asparagine 286.

It belongs to the thiolase-like superfamily. FabH family. Homodimer.

It localises to the cytoplasm. The catalysed reaction is malonyl-[ACP] + acetyl-CoA + H(+) = 3-oxobutanoyl-[ACP] + CO2 + CoA. Its pathway is lipid metabolism; fatty acid biosynthesis. Functionally, catalyzes the condensation reaction of fatty acid synthesis by the addition to an acyl acceptor of two carbons from malonyl-ACP. Catalyzes the first condensation reaction which initiates fatty acid synthesis and may therefore play a role in governing the total rate of fatty acid production. Possesses both acetoacetyl-ACP synthase and acetyl transacylase activities. Its substrate specificity determines the biosynthesis of branched-chain and/or straight-chain of fatty acids. The chain is Beta-ketoacyl-[acyl-carrier-protein] synthase III from Burkholderia orbicola (strain AU 1054).